A 152-amino-acid chain; its full sequence is Transcriptional regulator MraZ (152 aa).

2 consecutive SpoVT-AbrB domains span residues 5–52 (ATQI…TLSE) and 81–124 (ASEC…DEQA).

It belongs to the MraZ family. As to quaternary structure, forms oligomers.

It localises to the cytoplasm. Its subcellular location is the nucleoid. Functionally, negatively regulates its own expression and that of the subsequent genes in the proximal part of the division and cell wall (dcw) gene cluster. Acts by binding directly to DNA. May also regulate the expression of genes outside the dcw cluster. This is Transcriptional regulator MraZ from Photorhabdus laumondii subsp. laumondii (strain DSM 15139 / CIP 105565 / TT01) (Photorhabdus luminescens subsp. laumondii).